The following is a 245-amino-acid chain: tRNA1(Val) (adenine(37)-N6)-methyltransferase (245 aa).

This sequence belongs to the methyltransferase superfamily. tRNA (adenine-N(6)-)-methyltransferase family.

The protein resides in the cytoplasm. It catalyses the reaction adenosine(37) in tRNA1(Val) + S-adenosyl-L-methionine = N(6)-methyladenosine(37) in tRNA1(Val) + S-adenosyl-L-homocysteine + H(+). Specifically methylates the adenine in position 37 of tRNA(1)(Val) (anticodon cmo5UAC). The polypeptide is tRNA1(Val) (adenine(37)-N6)-methyltransferase (yfiC) (Escherichia coli (strain K12)).